Consider the following 323-residue polypeptide: 8-oxo-dGDP phosphatase NUDT18 (323 aa).

Residues 37-167 form the Nudix hydrolase domain; it reads RLRKNVCYVV…DVLHLVELGA (131 aa). A Mg(2+)-binding site is contributed by leucine 58. Residues 76 to 97 carry the Nudix box motif; sequence GRMEPGETIVEAMQREVKEEAG.

The protein belongs to the Nudix hydrolase family. Mn(2+) is required as a cofactor. The cofactor is Mg(2+).

The catalysed reaction is 8-oxo-dGDP + H2O = 8-oxo-dGMP + phosphate + H(+). The enzyme catalyses 8-oxo-dADP + H2O = 8-oxo-dAMP + phosphate + H(+). It carries out the reaction 2-oxo-dADP + H2O = 2-oxo-dAMP + phosphate + H(+). It catalyses the reaction 8-oxo-GDP + H2O = 8-oxo-GMP + phosphate + H(+). In terms of biological role, mediates the hydrolysis of oxidized nucleoside diphosphate derivatives. Hydrolyzes 8-oxo-7,8-dihydroguanine (8-oxo-Gua)-containing deoxyribo- and ribonucleoside diphosphates to the monophosphates. Hydrolyzes 8-oxo-dGDP and 8-oxo-GDP with the same efficiencies. Also hydrolyzes 8-OH-dADP and 2-OH-dADP. Exhibited no or minimal hydrolysis activity against 8-oxo-dGTP, 8-oxo-GTP, dGTP, GTP, dGDP and GDP. Probably removes oxidized guanine nucleotides from both the DNA and RNA precursor pools. The sequence is that of 8-oxo-dGDP phosphatase NUDT18 from Mus musculus (Mouse).